Reading from the N-terminus, the 639-residue chain is Protein phosphatase EYA4 (639 aa).

Met-1 carries the post-translational modification N-acetylmethionine. Disordered regions lie at residues 1–72 (MEDS…GGEN), 210–232 (QTQS…PQPG), and 300–368 (ADGT…DSDL). Lys-14 participates in a covalent cross-link: Glycyl lysine isopeptide (Lys-Gly) (interchain with G-Cter in SUMO2). Residues 18-30 (ESDVSQSQNSRSM) are compositionally biased toward polar residues. Lys-52 participates in a covalent cross-link: Glycyl lysine isopeptide (Lys-Gly) (interchain with G-Cter in SUMO2). Residues 56–66 (SNLSSTSVTTN) show a composition bias toward low complexity. A compositionally biased stretch (polar residues) spans 300–334 (ADGTPSSTSTYQLQESLPGLTNQPGEFDTMQSPST). A Phosphoserine modification is found at Ser-361. The Nucleophile role is filled by Asp-375. Mg(2+)-binding residues include Asp-375, Asp-377, and Asp-603. Asp-377 functions as the Proton donor in the catalytic mechanism.

The protein belongs to the HAD-like hydrolase superfamily. EYA family. As to quaternary structure, interacts with SIX3; translocates EYA4 from the cytoplasm to the nucleus and promotes activation of their target genes. Mg(2+) is required as a cofactor. Highly expressed in heart and skeletal muscle.

It is found in the cytoplasm. The protein resides in the nucleus. It carries out the reaction O-phospho-L-tyrosyl-[protein] + H2O = L-tyrosyl-[protein] + phosphate. Functionally, tyrosine phosphatase that specifically dephosphorylates 'Tyr-142' of histone H2AX (H2AXY142ph). 'Tyr-142' phosphorylation of histone H2AX plays a central role in DNA repair and acts as a mark that distinguishes between apoptotic and repair responses to genotoxic stress. Promotes efficient DNA repair by dephosphorylating H2AX, promoting the recruitment of DNA repair complexes containing MDC1. Its function as histone phosphatase probably explains its role in transcription regulation during organogenesis. May be involved in development of the eye. This is Protein phosphatase EYA4 (EYA4) from Homo sapiens (Human).